A 693-amino-acid chain; its full sequence is Adhesion G-protein coupled receptor G1 (693 aa).

The first 25 residues, 1-25 (MTPQSLLQTTLFLLSLLFLVQGAHG), serve as a signal peptide directing secretion. 26 to 33 (RGHREDFR) serves as a coordination point for heparin. The Extracellular portion of the chain corresponds to 26–401 (RGHREDFRFC…SVEVDAVHKH (376 aa)). Intrachain disulfides connect Cys-35–Cys-91 and Cys-121–Cys-177. Asn-39, Asn-148, and Asn-171 each carry an N-linked (GlcNAc...) asparagine glycan. A heparin-binding site is contributed by 190 to 200 (LKHPQKASRRP). The 172-residue stretch at 224–395 (DMVSFEEDRI…AVLMVSSVEV (172 aa)) folds into the GAIN-B domain. 4 N-linked (GlcNAc...) asparagine glycosylation sites follow: Asn-234, Asn-303, Asn-324, and Asn-341. 2 cysteine pairs are disulfide-bonded: Cys-346-Cys-377 and Cys-366-Cys-379. The GPS stretch occupies residues 346 to 395 (CVFWVEDPTLSSPGHWSSAGCETVRRETQTSCFCNHLTYFAVLMVSSVEV). The tract at residues 384-397 (YFAVLMVSSVEVDA) is stachel. Residues 402 to 424 (YLSLLSYVGCVVSALACLVTIAA) form a helical membrane-spanning segment. The Cytoplasmic portion of the chain corresponds to 425 to 437 (YLCSRVPLPCRRK). Residues 438–460 (PRDYTIKVHMNLLLAVFLLDTSF) form a helical membrane-spanning segment. Residues 461 to 465 (LLSEP) lie on the Extracellular side of the membrane. The helical transmembrane segment at 466–495 (VALTGSEAGCRASAIFLHFSLLTCLSWMGL) threads the bilayer. An intrachain disulfide couples Cys-475 to Cys-562. Topologically, residues 496-510 (EGYNLYRLVVEVFGT) are cytoplasmic. The helical transmembrane segment at 511-533 (YVPGYLLKLSAMGWGFPIFLVTL) threads the bilayer. The Extracellular portion of the chain corresponds to 534 to 562 (VALVDVDNYGPIILAVHRTPEGVIYPSMC). The helical transmembrane segment at 563 to 588 (WIRDSLVSYITNLGLFSLVFLFNMAM) threads the bilayer. The Cytoplasmic segment spans residues 589-602 (LATMVVQILRLRPH). Residues 603-624 (TQKWSHVLTLLGLSLVLGLPWA) traverse the membrane as a helical segment. Residues 625-628 (LIFF) lie on the Extracellular side of the membrane. Residues 629–654 (SFASGTFQLVVLYLFSIITSFQGFLI) traverse the membrane as a helical segment. The Cytoplasmic segment spans residues 655–693 (FIWYWSMRLQARGGPSPLKSNSDSARLPISSGSTSSSRI). A disordered region spans residues 670–693 (SPLKSNSDSARLPISSGSTSSSRI). Residues 684 to 693 (SSGSTSSSRI) show a composition bias toward low complexity.

This sequence belongs to the G-protein coupled receptor 2 family. LN-TM7 subfamily. In terms of assembly, heterodimer of 2 chains generated by proteolytic processing; the large extracellular N-terminal fragment (ADGRG1 NT) and the membrane-bound C-terminal fragment (ADGRG1-CT) predominantly remain associated and non-covalently linked. ADGRG1 NT self-associates in a trans-trans manner; the homophilic interaction enhances receptor signaling. Interacts with TGM2. Interacts with heparin; leading to the reduction of ADGRG1 shedding. Interacts with COL3A1. Part of a GPCR-tetraspanin complex at least consisting of ADGRG1, CD81, eventually CD9, and GNA11 in which CD81 is enhancing the association of ADGRG1 with GNA11. In terms of processing, autoproteolytically cleaved into 2 fragments; the large extracellular N-terminal fragment (ADGRG1 NT) and the membrane-bound C-terminal fragment (ADGRG1 CT) predominantly remain associated and non-covalently linked. Shedding to yield the secreted ADGRG1 N-terminal fragment seems to involve metalloprotease(s). Post-translationally, N-glycosylated. Contains sialic acid residues. Ubiquitinated. Undergoes polyubiquitination upon activation. As to expression, widely distributed with highest levels found in thyroid gland, brain and heart. Expressed in a great number of tumor cells. Expression is down-regulated in different tumors from highly metastatic cells.

It localises to the cell membrane. The protein localises to the secreted. The protein resides in the membrane raft. With respect to regulation, forms a heterodimer of 2 chains generated by proteolytic processing that remain associated through non-covalent interactions mediated by the GAIN-B domain. In the inactivated receptor, the Stachel sequence (also named stalk) is embedded in the GAIN-B domain, where it adopts a beta-strand conformation. On activation, the Stachel moves into the 7 transmembrane region and adopts a twisted hook-shaped configuration that forms contacts within the receptor, leading to coupling of a G-alpha protein, which activates signaling. The cleaved GAIN-B and N-terminal domains can then dissociate from the rest of the receptor. In terms of biological role, adhesion G-protein coupled receptor (aGPCR) for steroid hormone 17alpha-hydroxypregnenolone (17-OH), which is involved in cell adhesion and cell-cell interactions. Ligand binding causes a conformation change that triggers signaling via guanine nucleotide-binding proteins (G proteins) and modulates the activity of downstream effectors, such as RhoA pathway. ADGRG1 is coupled to G(12) and/or G(13) G proteins (GNA12 and GNA13, respectively) and mediates the activation Rho small GTPases. Acts as a potent suppressor of ferroptosis: binding to 17-OH-binding initiates signaling that down-regulates CD36 and alleviates ferroptosis-induced liver injury. Ligand-binding also induces cell adhesion activity via association with proteins such as collagen III/COL3A1 and TGM2. Mediates cell matrix adhesion in developing neurons and hematopoietic stem cells. Involved in cortical development, specifically in maintenance of the pial basement membrane integrity and in cortical lamination: association with COL3A1 in the developing brain inhibits neuronal migration via activation of the RhoA pathway. Together with TGM2, acts as a regulator of myelination and myelin repair in oligodendrocyte precursor cells. Acts as a hemostatic sensor of shear force: G protein-coupled receptor signaling is activated in response to shear force in platelets, promoting G(13) G protein signaling, and platelet shape change and aggregation in a COL3A1-dependent manner. Acts as an inhibitor of VEGFA production thereby inhibiting angiogenesis through a signaling pathway mediated by PRKCA. Plays a role in the maintenance of hematopoietic stem cells in bone marrow niche. Plays an essential role in testis development. This Homo sapiens (Human) protein is Adhesion G-protein coupled receptor G1.